A 338-amino-acid polypeptide reads, in one-letter code: Lipoate-protein ligase A (338 aa).

Positions 29-216 (PATQRVLFLW…AFFAHYGEHV (188 aa)) constitute a BPL/LPL catalytic domain. ATP-binding positions include Arg71, 76–79 (GAVF), and Lys134. (R)-lipoate is bound at residue Lys134.

It belongs to the LplA family. As to quaternary structure, monomer.

Its subcellular location is the cytoplasm. The enzyme catalyses L-lysyl-[lipoyl-carrier protein] + (R)-lipoate + ATP = N(6)-[(R)-lipoyl]-L-lysyl-[lipoyl-carrier protein] + AMP + diphosphate + H(+). It functions in the pathway protein modification; protein lipoylation via exogenous pathway; protein N(6)-(lipoyl)lysine from lipoate: step 1/2. It participates in protein modification; protein lipoylation via exogenous pathway; protein N(6)-(lipoyl)lysine from lipoate: step 2/2. Catalyzes both the ATP-dependent activation of exogenously supplied lipoate to lipoyl-AMP and the transfer of the activated lipoyl onto the lipoyl domains of lipoate-dependent enzymes. The sequence is that of Lipoate-protein ligase A from Escherichia coli O17:K52:H18 (strain UMN026 / ExPEC).